The chain runs to 239 residues: tRNA (guanine-N(1)-)-methyltransferase (239 aa).

Residues glycine 109 and isoleucine 133–leucine 138 contribute to the S-adenosyl-L-methionine site. Disordered regions lie at residues proline 163–proline 187 and glutamine 217–arginine 239. 2 stretches are compositionally biased toward basic and acidic residues: residues serine 165–glutamate 180 and glutamine 217–leucine 226.

It belongs to the RNA methyltransferase TrmD family. Homodimer.

The protein resides in the cytoplasm. It carries out the reaction guanosine(37) in tRNA + S-adenosyl-L-methionine = N(1)-methylguanosine(37) in tRNA + S-adenosyl-L-homocysteine + H(+). Specifically methylates guanosine-37 in various tRNAs. The sequence is that of tRNA (guanine-N(1)-)-methyltransferase from Mycolicibacterium paratuberculosis (strain ATCC BAA-968 / K-10) (Mycobacterium paratuberculosis).